A 419-amino-acid chain; its full sequence is D-amino acid dehydrogenase (419 aa).

An FAD-binding site is contributed by 3–17 (VLILGSGVVGVTSAY).

The protein belongs to the DadA oxidoreductase family. It depends on FAD as a cofactor.

It catalyses the reaction a D-alpha-amino acid + A + H2O = a 2-oxocarboxylate + AH2 + NH4(+). It participates in amino-acid degradation; D-alanine degradation; NH(3) and pyruvate from D-alanine: step 1/1. Oxidative deamination of D-amino acids. This chain is D-amino acid dehydrogenase, found in Chromohalobacter salexigens (strain ATCC BAA-138 / DSM 3043 / CIP 106854 / NCIMB 13768 / 1H11).